The sequence spans 137 residues: Putative pre-16S rRNA nuclease (137 aa).

This sequence belongs to the YqgF nuclease family.

It localises to the cytoplasm. Functionally, could be a nuclease involved in processing of the 5'-end of pre-16S rRNA. This chain is Putative pre-16S rRNA nuclease, found in Clostridium perfringens (strain ATCC 13124 / DSM 756 / JCM 1290 / NCIMB 6125 / NCTC 8237 / Type A).